We begin with the raw amino-acid sequence, 283 residues long: Syntaxin VAM3 (283 aa).

Residues 1 to 26 (MSFFDIEAQSSKGNSQQEPQFSTNQK) are disordered. The Cytoplasmic portion of the chain corresponds to 1 to 261 (MSFFDIEAQS…ADQHQRDRNK (261 aa)). A compositionally biased stretch (polar residues) spans 8 to 25 (AQSSKGNSQQEPQFSTNQ). Coiled coils occupy residues 28–48 (KELS…EKEC) and 84–111 (LIHQ…SYNQ). Disordered stretches follow at residues 116–146 (FPLK…DPES) and 162–182 (NEGQ…QGLS). A compositionally biased stretch (basic and acidic residues) spans 127-144 (SKERKDIHPRTEAVRQDP). The stretch at 169-189 (QLQEEQEQQQQGLSQEELDFQ) forms a coiled coil. The t-SNARE coiled-coil homology domain occupies 190 to 252 (TIIHQERSQQ…QNANKQLTRA (63 aa)). A helical; Anchor for type IV membrane protein membrane pass occupies residues 262–282 (CGKVTLIIIIVVCMVVLLAVL). S283 is a topological domain (vacuolar).

Belongs to the syntaxin family. As to quaternary structure, associates with VAM7.

It is found in the vacuole membrane. Functionally, required for vacuolar assembly. Provides the t-SNARE function in a late step of the vacuolar assembly. Required for homotypic vacuole membrane fusion, autophagy and fusion of biosynthetic transport vesicles with the vacuole. Required for the delivery of alpha-factor receptor-ligand complexes to the vacuole. The protein is Syntaxin VAM3 (VAM3) of Saccharomyces cerevisiae (strain ATCC 204508 / S288c) (Baker's yeast).